A 207-amino-acid polypeptide reads, in one-letter code: Small ribosomal subunit protein uS4 (207 aa).

The disordered stretch occupies residues 31 to 54; the sequence is KSKFETKPGQHGRTSGSRTSDFGL. Residues 42–52 show a composition bias toward polar residues; it reads GRTSGSRTSDF. Residues 97–158 enclose the S4 RNA-binding domain; the sequence is SRLDNVVYRM…KAKKQLRVTE (62 aa).

This sequence belongs to the universal ribosomal protein uS4 family. Part of the 30S ribosomal subunit. Contacts protein S5. The interaction surface between S4 and S5 is involved in control of translational fidelity.

Functionally, one of the primary rRNA binding proteins, it binds directly to 16S rRNA where it nucleates assembly of the body of the 30S subunit. In terms of biological role, with S5 and S12 plays an important role in translational accuracy. The protein is Small ribosomal subunit protein uS4 of Methylibium petroleiphilum (strain ATCC BAA-1232 / LMG 22953 / PM1).